The following is a 200-amino-acid chain: Potassium-transporting ATPase KdpC subunit (200 aa).

Residues 6–26 (PALVLLILLTLITGIAYPLLT) traverse the membrane as a helical segment.

This sequence belongs to the KdpC family. The system is composed of three essential subunits: KdpA, KdpB and KdpC.

The protein localises to the cell inner membrane. In terms of biological role, part of the high-affinity ATP-driven potassium transport (or Kdp) system, which catalyzes the hydrolysis of ATP coupled with the electrogenic transport of potassium into the cytoplasm. This subunit acts as a catalytic chaperone that increases the ATP-binding affinity of the ATP-hydrolyzing subunit KdpB by the formation of a transient KdpB/KdpC/ATP ternary complex. This chain is Potassium-transporting ATPase KdpC subunit, found in Yersinia pseudotuberculosis serotype O:1b (strain IP 31758).